Consider the following 406-residue polypeptide: Acetylornithine aminotransferase (406 aa).

Pyridoxal 5'-phosphate is bound by residues 113-114 (GT) and F145. R148 is a binding site for N(2)-acetyl-L-ornithine. 233–236 (DEIQ) is a binding site for pyridoxal 5'-phosphate. N6-(pyridoxal phosphate)lysine is present on K262. Residue S290 coordinates N(2)-acetyl-L-ornithine. Residue T291 coordinates pyridoxal 5'-phosphate.

Belongs to the class-III pyridoxal-phosphate-dependent aminotransferase family. ArgD subfamily. In terms of assembly, homodimer. The cofactor is pyridoxal 5'-phosphate.

It is found in the cytoplasm. It carries out the reaction N(2)-acetyl-L-ornithine + 2-oxoglutarate = N-acetyl-L-glutamate 5-semialdehyde + L-glutamate. It participates in amino-acid biosynthesis; L-arginine biosynthesis; N(2)-acetyl-L-ornithine from L-glutamate: step 4/4. The polypeptide is Acetylornithine aminotransferase (Leptospira interrogans serogroup Icterohaemorrhagiae serovar Lai (strain 56601)).